Consider the following 431-residue polypeptide: Salivary plasminogen activator beta (431 aa).

The N-terminal stretch at 1 to 36 (MVNTMKTKLLCVLLLCGAVFSLPRQETYRQLARGSR) is a signal peptide. Positions 37–75 (AYGGCSELRCFNGGTCWQAASFSDFVCQCPKGYTGKQCE) constitute an EGF-like domain. Cystine bridges form between Cys-41-Cys-52, Cys-46-Cys-63, Cys-65-Cys-74, Cys-82-Cys-163, Cys-103-Cys-145, Cys-134-Cys-158, Cys-168-Cys-299, Cys-211-Cys-227, Cys-219-Cys-288, Cys-313-Cys-388, Cys-345-Cys-361, and Cys-378-Cys-406. Positions 82-163 (CYKDQGVTYR…ILEFCSVPVC (82 aa)) constitute a Kringle domain. The N-linked (GlcNAc...) asparagine glycan is linked to Asn-139. The Peptidase S1 domain maps to 180–430 (STGGLFTDIT…YLGWIRDNMR (251 aa)). Active-site charge relay system residues include His-226 and Asp-275. N-linked (GlcNAc...) asparagine glycosylation occurs at Asn-352. Ser-382 functions as the Charge relay system in the catalytic mechanism.

It belongs to the peptidase S1 family. In terms of assembly, monomer.

The protein localises to the secreted. It catalyses the reaction Specific cleavage of Arg-|-Val bond in plasminogen to form plasmin.. Functionally, probably essential to support the feeding habits of this exclusively haematophagous animal. Probable potent thrombolytic agent. In Desmodus rotundus (Vampire bat), this protein is Salivary plasminogen activator beta.